The chain runs to 451 residues: 3-phosphoshikimate 1-carboxyvinyltransferase (451 aa).

3 residues coordinate 3-phosphoshikimate: Lys-30, Ser-31, and Arg-35. Lys-30 is a binding site for phosphoenolpyruvate. Phosphoenolpyruvate-binding residues include Gly-101 and Arg-130. The 3-phosphoshikimate site is built by Ser-176, Ser-177, Gln-178, Asp-321, and Lys-348. Position 178 (Gln-178) interacts with phosphoenolpyruvate. Catalysis depends on Asp-321, which acts as the Proton acceptor. The phosphoenolpyruvate site is built by Arg-352 and Gln-422.

Belongs to the EPSP synthase family. As to quaternary structure, monomer.

The protein resides in the cytoplasm. It catalyses the reaction 3-phosphoshikimate + phosphoenolpyruvate = 5-O-(1-carboxyvinyl)-3-phosphoshikimate + phosphate. The protein operates within metabolic intermediate biosynthesis; chorismate biosynthesis; chorismate from D-erythrose 4-phosphate and phosphoenolpyruvate: step 6/7. Functionally, catalyzes the transfer of the enolpyruvyl moiety of phosphoenolpyruvate (PEP) to the 5-hydroxyl of shikimate-3-phosphate (S3P) to produce enolpyruvyl shikimate-3-phosphate and inorganic phosphate. The polypeptide is 3-phosphoshikimate 1-carboxyvinyltransferase (Burkholderia pseudomallei (strain K96243)).